The primary structure comprises 492 residues: T-box transcription factor TBX5-A (492 aa).

Positions 1–43 (MADSEDTFRLQNSPSDSEPKDLQNEGKSDKQNAAVSKSPSSQT) are disordered. The span at 17 to 30 (SEPKDLQNEGKSDK) shows a compositional bias: basic and acidic residues. The span at 31–43 (QNAAVSKSPSSQT) shows a compositional bias: polar residues. A DNA-binding region (T-box) is located at residues 62 to 237 (LWTKFHEVGT…NNPFAKGFRG (176 aa)). The interval 331-352 (AGEHPYKKPYVESSSSEDDHYY) is disordered.

In terms of assembly, monomer. Homodimer (via the T-box); binds DNA as homodimer. In terms of tissue distribution, expressed in the dorsal optic cup of developing eye, pectoral fin buds and heart. At 31 hpf, when the pectoral fin buds have begun bulging outwards, restricted expression is detected throughout the mesenchyme of the early fin buds and these high levels of expression continue until later stages.

It is found in the nucleus. The protein resides in the cytoplasm. Functionally, required for pectoral fin formation. Together with tbx5b, involved in eye and heart development. Required for the looping stage of heart development. May bind to the core DNA motif of promoters. In Danio rerio (Zebrafish), this protein is T-box transcription factor TBX5-A (tbx5a).